The primary structure comprises 159 residues: Eukaryotic translation initiation factor 5A-2 (159 aa).

Over residues 1-12 the composition is skewed to basic and acidic residues; that stretch reads MSDEEHQFESKA. The tract at residues 1 to 23 is disordered; the sequence is MSDEEHQFESKADAGASKTYPQQ. At Lys52 the chain carries Hypusine.

It belongs to the eIF-5A family. Lys-52 undergoes hypusination, a unique post-translational modification that consists in the addition of a butylamino group from spermidine to lysine side chain, leading to the formation of the unusual amino acid hypusine. eIF-5As are the only known proteins to undergo this modification, which is essential for their function.

In terms of biological role, translation factor that promotes translation elongation and termination, particularly upon ribosome stalling at specific amino acid sequence contexts. Binds between the exit (E) and peptidyl (P) site of the ribosome and promotes rescue of stalled ribosome: specifically required for efficient translation of polyproline-containing peptides as well as other motifs that stall the ribosome. Acts as a ribosome quality control (RQC) cofactor by joining the RQC complex to facilitate peptidyl transfer during CAT tailing step. The sequence is that of Eukaryotic translation initiation factor 5A-2 (EIF-5A2) from Nicotiana plumbaginifolia (Leadwort-leaved tobacco).